Reading from the N-terminus, the 1828-residue chain is Dedicator of cytokinesis protein 2 (1828 aa).

The region spanning 8-69 (DKERHGVAIY…PTSFIHLKEV (62 aa)) is the SH3 domain. N6-acetyllysine is present on lysine 304. The C2 DOCK-type domain occupies 423-607 (RNDIYITLLQ…DVFSISTLVC (185 aa)). 2 positions are modified to phosphoserine: serine 588 and serine 593. Lysine 738 carries the post-translational modification N6-acetyllysine. The DOCKER domain maps to 1210–1621 (YKDNNREEMY…VEKEYGVREM (412 aa)). Positions 1652–1703 (SDCSTPSKVPAESFDLESAPPKTPKVEEEPISPGSTLPEVKLRRSKKRTKRS) are disordered. A phosphoserine mark is found at serine 1683, serine 1704, serine 1729, and serine 1782.

This sequence belongs to the DOCK family. In terms of assembly, homodimer. Interacts with RAC1 and RAC2. Interacts with CRKL and VAV. Interacts with CD3Z. In terms of tissue distribution, specifically expressed in hematopoietic cells.

The protein localises to the endomembrane system. Its subcellular location is the cytoplasm. It is found in the cytoskeleton. Involved in cytoskeletal rearrangements required for lymphocyte migration in response of chemokines. Activates RAC1 and RAC2, but not CDC42, by functioning as a guanine nucleotide exchange factor (GEF), which exchanges bound GDP for free GTP. May also participate in IL2 transcriptional activation via the activation of RAC2. This is Dedicator of cytokinesis protein 2 (Dock2) from Mus musculus (Mouse).